We begin with the raw amino-acid sequence, 435 residues long: Tubulin-like protein TubZ (435 aa).

GTP contacts are provided by residues 25 to 26, 124 to 126, Asn-185, and Asn-209; these read MG and GTG. Residues 403–435 are disordered; sequence QEEKPKKKKLNFGAEPEAEVADDSQPTKKKLSF.

This sequence belongs to the FtsZ family. TubZ subfamily. Polymerizes to form two-stranded filaments and bundles at higher concentration in the presence of GTP. Binds to the TubR-tubC protein DNA complex.

It localises to the cytoplasm. It carries out the reaction GTP + H2O = GDP + phosphate + H(+). With respect to regulation, GTPase inhibited by GTP-gamma-S, which also stabilizes filaments. A tubulin-like, filament forming GTPase; the motor component of the type III plasmid partition system which ensures correct segregation of the pXO1 plasmid. Essential for plasmid replication. The filaments seed from a DNA centromere-like site (tubC)-TubR complex which extends to surround the TubZ filaments. Highly dynamic filaments grow at the plus end and depolymerize at the minus end, a process called treadmilling. TubR-tubC complexes track the depolymerizing minus end of the filament, probably pulling plasmid within the cell. Has a high GTPase activity; in the presence of GTP assembles into dynamic filaments which bind almost exclusively GDP. Filament formation is cooperative, requiring a critical concentration. Formation occurs very quickly and is followed by disassembly as GTP is consumed. Small amounts of GTP-gamma-S stabilize filaments. Has high GTP and dGTPase activity, 6-fold lower ATPase activity. Forms filaments in the presence of ATP that also disassemble. Weakly binds DNA in a GTP-dependent, non-sequence-specific manner; GTP hydrolysis is not required for DNA-binding. The protein is Tubulin-like protein TubZ of Bacillus anthracis.